A 452-amino-acid chain; its full sequence is Fructose-2,6-bisphosphatase (452 aa).

The 6-phosphofructo-2-kinase stretch occupies residues 1–223; it reads MGYSTISNDN…VFYVMNIRPK (223 aa). Position 20-28 (20-28) interacts with ATP; that stretch reads GLPARGKSF. Beta-D-fructose 6-phosphate is bound by residues Arg53 and Arg78. The active site involves Asp104. 2 residues coordinate beta-D-fructose 6-phosphate: Thr106 and Arg112. 143–148 lines the ATP pocket; it reads NAKDIG. Residues Arg169 and Tyr173 each coordinate beta-D-fructose 6-phosphate. The interval 224-452 is fructose-2,6-bisphosphatase; it reads PKYIWLSRHG…LNDSPLEDKF (229 aa). Arg231 provides a ligand contact to beta-D-fructose 2,6-bisphosphate. His232 serves as the catalytic Tele-phosphohistidine intermediate. Beta-D-fructose 2,6-bisphosphate contacts are provided by Asn238 and Gly244. Glu302 acts as the Proton donor/acceptor in catalysis. 6 residues coordinate beta-D-fructose 2,6-bisphosphate: Tyr313, Arg327, Lys331, Tyr342, Gln368, and Arg372. 324 to 327 serves as a coordination point for ATP; the sequence is FKAR. Residues 368–372 and Tyr404 contribute to the ATP site; that span reads QAVLR. A phosphoserine mark is found at Ser435 and Ser446.

In the C-terminal section; belongs to the phosphoglycerate mutase family.

It carries out the reaction beta-D-fructose 2,6-bisphosphate + H2O = beta-D-fructose 6-phosphate + phosphate. Inhibited by fructose 6-P, activated by glycerol 3-P. Its function is as follows. Monofunctional, high-specificity fructose-2,6-bisphosphatase, which releases phosphate from the 2-position of fructose 2,6-bisphosphate. Has no detectable 6-phosphofructo-2-kinase activity. The protein is Fructose-2,6-bisphosphatase of Saccharomyces cerevisiae (strain ATCC 204508 / S288c) (Baker's yeast).